Reading from the N-terminus, the 176-residue chain is Peptide deformylase (176 aa).

Positions 97 and 139 each coordinate Fe cation. Glu-140 is an active-site residue. His-143 is a Fe cation binding site.

This sequence belongs to the polypeptide deformylase family. Fe(2+) is required as a cofactor.

It carries out the reaction N-terminal N-formyl-L-methionyl-[peptide] + H2O = N-terminal L-methionyl-[peptide] + formate. Its function is as follows. Removes the formyl group from the N-terminal Met of newly synthesized proteins. Requires at least a dipeptide for an efficient rate of reaction. N-terminal L-methionine is a prerequisite for activity but the enzyme has broad specificity at other positions. This chain is Peptide deformylase, found in Thermomicrobium roseum (strain ATCC 27502 / DSM 5159 / P-2).